The sequence spans 278 residues: Tryptophan synthase alpha chain (278 aa).

Active-site proton acceptor residues include E50 and D61.

It belongs to the TrpA family. As to quaternary structure, tetramer of two alpha and two beta chains.

It carries out the reaction (1S,2R)-1-C-(indol-3-yl)glycerol 3-phosphate + L-serine = D-glyceraldehyde 3-phosphate + L-tryptophan + H2O. Its pathway is amino-acid biosynthesis; L-tryptophan biosynthesis; L-tryptophan from chorismate: step 5/5. The alpha subunit is responsible for the aldol cleavage of indoleglycerol phosphate to indole and glyceraldehyde 3-phosphate. The chain is Tryptophan synthase alpha chain from Nitrobacter winogradskyi (strain ATCC 25391 / DSM 10237 / CIP 104748 / NCIMB 11846 / Nb-255).